Consider the following 619-residue polypeptide: Dihydroxy-acid dehydratase 1 (619 aa).

Residue Asp-81 participates in Mg(2+) binding. [2Fe-2S] cluster is bound at residue Cys-122. Mg(2+) is bound by residues Asp-123 and Lys-124. An N6-carboxylysine modification is found at Lys-124. Residue Cys-201 participates in [2Fe-2S] cluster binding. Glu-496 is a Mg(2+) binding site. Ser-522 acts as the Proton acceptor in catalysis.

Belongs to the IlvD/Edd family. Homodimer. The cofactor is [2Fe-2S] cluster. Mg(2+) serves as cofactor.

The enzyme catalyses (2R)-2,3-dihydroxy-3-methylbutanoate = 3-methyl-2-oxobutanoate + H2O. The catalysed reaction is (2R,3R)-2,3-dihydroxy-3-methylpentanoate = (S)-3-methyl-2-oxopentanoate + H2O. It participates in amino-acid biosynthesis; L-isoleucine biosynthesis; L-isoleucine from 2-oxobutanoate: step 3/4. The protein operates within amino-acid biosynthesis; L-valine biosynthesis; L-valine from pyruvate: step 3/4. Functions in the biosynthesis of branched-chain amino acids. Catalyzes the dehydration of (2R,3R)-2,3-dihydroxy-3-methylpentanoate (2,3-dihydroxy-3-methylvalerate) into 2-oxo-3-methylpentanoate (2-oxo-3-methylvalerate) and of (2R)-2,3-dihydroxy-3-methylbutanoate (2,3-dihydroxyisovalerate) into 2-oxo-3-methylbutanoate (2-oxoisovalerate), the penultimate precursor to L-isoleucine and L-valine, respectively. This is Dihydroxy-acid dehydratase 1 from Burkholderia lata (strain ATCC 17760 / DSM 23089 / LMG 22485 / NCIMB 9086 / R18194 / 383).